We begin with the raw amino-acid sequence, 375 residues long: Lipid-A-disaccharide synthase (375 aa).

The protein belongs to the LpxB family.

It carries out the reaction a lipid X + a UDP-2-N,3-O-bis[(3R)-3-hydroxyacyl]-alpha-D-glucosamine = a lipid A disaccharide + UDP + H(+). It functions in the pathway bacterial outer membrane biogenesis; LPS lipid A biosynthesis. Functionally, condensation of UDP-2,3-diacylglucosamine and 2,3-diacylglucosamine-1-phosphate to form lipid A disaccharide, a precursor of lipid A, a phosphorylated glycolipid that anchors the lipopolysaccharide to the outer membrane of the cell. The polypeptide is Lipid-A-disaccharide synthase (Pseudomonas putida (strain ATCC 47054 / DSM 6125 / CFBP 8728 / NCIMB 11950 / KT2440)).